Reading from the N-terminus, the 173-residue chain is CKLF-like MARVEL transmembrane domain-containing protein 8 (173 aa).

An MARVEL domain is found at 36 to 168; the sequence is FLRTLPGLLI…NTYFSFIAWR (133 aa). The next 4 helical transmembrane spans lie at 40 to 60, 70 to 90, 105 to 125, and 147 to 167; these read LPGL…TLIA, FGWV…FLII, TTVG…AAIV, and FFAF…FIAW.

Belongs to the chemokine-like factor family.

It localises to the membrane. The protein is CKLF-like MARVEL transmembrane domain-containing protein 8 (CMTM8) of Bos taurus (Bovine).